Here is a 558-residue protein sequence, read N- to C-terminus: Ribonuclease J (558 aa).

Zn(2+)-binding residues include histidine 81, histidine 83, aspartate 85, histidine 86, histidine 148, and aspartate 170. 371–375 serves as a coordination point for substrate; that stretch reads HVSGH. Histidine 397 contacts Zn(2+).

This sequence belongs to the metallo-beta-lactamase superfamily. RNA-metabolizing metallo-beta-lactamase-like family. Bacterial RNase J subfamily. Homodimer, may be a subunit of the RNA degradosome. It depends on Zn(2+) as a cofactor.

It is found in the cytoplasm. Its function is as follows. An RNase that has 5'-3' exonuclease and possibly endoonuclease activity. Involved in maturation of rRNA and in some organisms also mRNA maturation and/or decay. The sequence is that of Ribonuclease J from Mycobacterium tuberculosis (strain CDC 1551 / Oshkosh).